Consider the following 139-residue polypeptide: Protein Turandot B (139 aa).

An N-terminal signal peptide occupies residues 1-21 (MNFKTALICFALLLIGTLCSA).

Belongs to the Turandot family.

It localises to the secreted. In terms of biological role, a humoral factor that may play a role in stress tolerance. The sequence is that of Protein Turandot B from Drosophila simulans (Fruit fly).